Reading from the N-terminus, the 78-residue chain is DNA-directed RNA polymerase subunit Rpo5 (78 aa).

This sequence belongs to the archaeal Rpo5/eukaryotic RPB5 RNA polymerase subunit family. In terms of assembly, part of the RNA polymerase complex.

The protein localises to the cytoplasm. The enzyme catalyses RNA(n) + a ribonucleoside 5'-triphosphate = RNA(n+1) + diphosphate. Functionally, DNA-dependent RNA polymerase (RNAP) catalyzes the transcription of DNA into RNA using the four ribonucleoside triphosphates as substrates. This Methanococcus maripaludis (strain C7 / ATCC BAA-1331) protein is DNA-directed RNA polymerase subunit Rpo5.